The following is an 82-amino-acid chain: Translational regulator CsrA (82 aa).

The protein belongs to the CsrA/RsmA family. Homodimer; the beta-strands of each monomer intercalate to form a hydrophobic core while the alpha-helices form wings that extend away from the core. Each of the alpha-helical wings interacts with an FliW monomer, yielding a FliW-CsrA(2)-FliW complex.

Its subcellular location is the cytoplasm. Functionally, a translational regulator that binds mRNA to regulate translation initiation and/or mRNA stability. Usually binds in the 5'-UTR at or near the Shine-Dalgarno sequence preventing ribosome-binding, thus repressing translation. Its main target seems to be the major flagellin gene, while its function is anatagonized by FliW. The chain is Translational regulator CsrA from Geobacillus thermodenitrificans (strain NG80-2).